The primary structure comprises 496 residues: Thiamine transporter 2 (496 aa).

The Cytoplasmic portion of the chain corresponds to 1-7; it reads MDCYRTS. Residues 8-28 form a helical membrane-spanning segment; sequence PSNSWIYTTVILCIFGFFSMM. At 29 to 53 the chain is on the extracellular side; that stretch reads RPSEPFLIPYLSGPDKNLTSEEMTN. An N-linked (GlcNAc...) asparagine glycan is attached at Asn45. The helical transmembrane segment at 54-74 threads the bilayer; that stretch reads EIFPVWTYSYLVLLLPVLVLT. Residues 75 to 81 are Cytoplasmic-facing; that stretch reads DYVRYKP. Residues 82–102 traverse the membrane as a helical segment; sequence VIILQGISFIITWLLLLFGQG. At 103–110 the chain is on the extracellular side; that stretch reads VKTMQVVE. The helical transmembrane segment at 111–131 threads the bilayer; it reads FFYGMVTATEVAYYAYIYSVV. At 132–144 the chain is on the cytoplasmic side; that stretch reads SPEHYQRVSGYCR. The chain crosses the membrane as a helical span at residues 145-165; the sequence is SVTLVAYTAGSVLAQLLVSLA. N-linked (GlcNAc...) asparagine glycosylation occurs at Asn166. Over 166 to 169 the chain is Extracellular; sequence NLSY. Residues 170 to 190 traverse the membrane as a helical segment; sequence FYLNVISLASVSVAFLFSLFL. Over 191–282 the chain is Cytoplasmic; sequence PMPKKSMFFH…YSSKRLFYWS (92 aa). The interval 210 to 248 is disordered; it reads SSSVNPVLEETHEGEAPDCEKQKPTSEIPSTSGKLHKGQ. Basic and acidic residues predominate over residues 218-233; the sequence is EETHEGEAPDCEKQKP. Residues 234-248 show a composition bias toward polar residues; that stretch reads TSEIPSTSGKLHKGQ. Residues 283 to 303 form a helical membrane-spanning segment; sequence LWWAFATAGFNQILNYVQILW. The Extracellular portion of the chain corresponds to 304–316; it reads DYKSPSQDSSIYN. The helical transmembrane segment at 317 to 337 threads the bilayer; it reads GAVEATATFGGAVAAFAVGYV. Over 338 to 342 the chain is Cytoplasmic; that stretch reads KVNWD. Residues 343 to 363 form a helical membrane-spanning segment; that stretch reads LLGELALAVFSVVNAGSLFLM. The Extracellular portion of the chain corresponds to 364–375; it reads HYTANIWACYAG. Residues 376–396 traverse the membrane as a helical segment; it reads YLIFKSSYMLLITIAVFQIAV. Topologically, residues 397 to 405 are cytoplasmic; that stretch reads NLSVERYAL. A helical transmembrane segment spans residues 406-426; it reads VFGINTFIALVIQTIITVIVV. Over 427–434 the chain is Extracellular; it reads DQRGLNLP. Residues 435-455 traverse the membrane as a helical segment; the sequence is ISIQFLVYGSYFAVIAGIFLM. The Cytoplasmic segment spans residues 456–496; sequence RSMYIIYSTKSQKDVQSPAPSENPDMSHPEEESNAIMSTKL. The interval 469 to 496 is disordered; that stretch reads DVQSPAPSENPDMSHPEEESNAIMSTKL.

Belongs to the reduced folate carrier (RFC) transporter (TC 2.A.48) family.

Its subcellular location is the membrane. It carries out the reaction thiamine(out) + H(+)(in) = thiamine(in) + H(+)(out). The catalysed reaction is pyridoxine(out) + n H(+)(out) = pyridoxine(in) + n H(+)(in). Mediates high affinity thiamine uptake, probably via a proton anti-port mechanism. Has no folate transport activity. Mediates H(+)-dependent pyridoxine transport. This is Thiamine transporter 2 (SLC19A3) from Macaca fascicularis (Crab-eating macaque).